The primary structure comprises 733 residues: LMBR1 domain-containing protein 2 homolog A (733 aa).

A run of 5 helical transmembrane segments spans residues 1 to 21, 33 to 53, 125 to 145, 163 to 183, and 191 to 211; these read MIVI…KILH, VYIS…LVPI, FYFG…SFVL, AYLY…LLAV, and MVGF…IILM. A coiled-coil region spans residues 232-266; it reads LKHLQFKAVELLNSKKKANEELIATMKVIRRIQEK. 4 helical membrane passes run 386–406, 423–443, 468–488, and 513–533; these read AAIV…ALAF, VSNI…ALTC, SIIF…YNFI, and VAPF…VIVC. Disordered stretches follow at residues 581 to 641, 649 to 668, and 674 to 696; these read NNIK…TSSA, LKKS…PYEQ, and ESND…TYNA. A compositionally biased stretch (polar residues) spans 596-619; the sequence is DSTSNNPKQIFKSGSTTISKQSPP. Low complexity-rich tracts occupy residues 620 to 640 and 654 to 664; these read NLNV…NTSS and NNNNNNNNNNN. Positions 674–685 are enriched in acidic residues; it reads ESNDFDDDDDIE.

Belongs to the LIMR family.

It is found in the membrane. In Dictyostelium discoideum (Social amoeba), this protein is LMBR1 domain-containing protein 2 homolog A.